The primary structure comprises 307 residues: D-alanine--D-alanine ligase (307 aa).

One can recognise an ATP-grasp domain in the interval 101–301 (RDVLAAAGVP…FGELVRWMVD (201 aa)). ATP is bound at residue 128–182 (LPPPYVIKPLGEGSSFGVFIVREDQAYPPQELTRSDWAFGNRVLVESYIGGRELT). Asp251, Glu268, and Asn270 together coordinate Mg(2+).

Belongs to the D-alanine--D-alanine ligase family. It depends on Mg(2+) as a cofactor. Mn(2+) serves as cofactor.

It localises to the cytoplasm. It catalyses the reaction 2 D-alanine + ATP = D-alanyl-D-alanine + ADP + phosphate + H(+). Its pathway is cell wall biogenesis; peptidoglycan biosynthesis. In terms of biological role, cell wall formation. In Beijerinckia indica subsp. indica (strain ATCC 9039 / DSM 1715 / NCIMB 8712), this protein is D-alanine--D-alanine ligase.